A 375-amino-acid chain; its full sequence is ATP phosphoribosyltransferase regulatory subunit (375 aa).

It belongs to the class-II aminoacyl-tRNA synthetase family. HisZ subfamily. In terms of assembly, heteromultimer composed of HisG and HisZ subunits.

Its subcellular location is the cytoplasm. It participates in amino-acid biosynthesis; L-histidine biosynthesis; L-histidine from 5-phospho-alpha-D-ribose 1-diphosphate: step 1/9. Required for the first step of histidine biosynthesis. May allow the feedback regulation of ATP phosphoribosyltransferase activity by histidine. The chain is ATP phosphoribosyltransferase regulatory subunit from Agrobacterium fabrum (strain C58 / ATCC 33970) (Agrobacterium tumefaciens (strain C58)).